We begin with the raw amino-acid sequence, 594 residues long: UvrABC system protein C (594 aa).

In terms of domain architecture, GIY-YIG spans 17 to 94 (LEPGCYLMKD…IKQYQPRYNI (78 aa)). The UVR domain occupies 199 to 234 (KTILNHLEERMNKASEQLDFEQAKEYRDMIQHIHNL).

It belongs to the UvrC family. As to quaternary structure, interacts with UvrB in an incision complex.

It is found in the cytoplasm. In terms of biological role, the UvrABC repair system catalyzes the recognition and processing of DNA lesions. UvrC both incises the 5' and 3' sides of the lesion. The N-terminal half is responsible for the 3' incision and the C-terminal half is responsible for the 5' incision. The chain is UvrABC system protein C from Staphylococcus epidermidis (strain ATCC 35984 / DSM 28319 / BCRC 17069 / CCUG 31568 / BM 3577 / RP62A).